A 166-amino-acid chain; its full sequence is UPF0178 protein BPUM_2255 (166 aa).

The protein belongs to the UPF0178 family.

The protein is UPF0178 protein BPUM_2255 of Bacillus pumilus (strain SAFR-032).